Reading from the N-terminus, the 1567-residue chain is ABC multidrug transporter MDR1 (1567 aa).

Pro residues predominate over residues 1 to 11; that stretch reads MASQPPQPPSG. Positions 1–37 are disordered; sequence MASQPPQPPSGQPDTQYEEYQSEVITETTNRPTPAAD. Over residues 22-32 the composition is skewed to polar residues; sequence SEVITETTNRP. N-linked (GlcNAc...) asparagine glycans are attached at residues Asn149, Asn157, and Asn356. An ABC transporter 1 domain is found at 167–432; it reads VQYQDTFLSP…FEEMGWYCPP (266 aa). Transmembrane regions (helical) follow at residues 543-563, 571-591, 636-656, 661-681, 691-711, and 798-818; these read STIA…SLFF, GFFA…LMSI, IPIK…LGGL, AKFF…SAIF, IPQA…YTGF, and LGIL…VSEL. 3 N-linked (GlcNAc...) asparagine glycosylation sites follow: Asn819, Asn895, and Asn912. Residues 891 to 1134 enclose the ABC transporter 2 domain; that stretch reads FTWRNVTYDI…LLNYFETHGA (244 aa). An ATP-binding site is contributed by 927–934; the sequence is GVSGAGKT. Residues 1172 to 1202 are disordered; that stretch reads ESRHVQQELDRIQSETSKRNEGHGQSAEKEP. The helical transmembrane segment at 1231–1251 threads the bilayer; the sequence is IWGKLLLGLASALFIGFSFFL. Asn1253 carries N-linked (GlcNAc...) asparagine glycosylation. Transmembrane regions (helical) follow at residues 1257 to 1277, 1305 to 1325, 1345 to 1365, 1372 to 1392, and 1498 to 1518; these read AGLQ…SSLV, VFLL…GIIA, ILLL…QMII, ETAG…NGVL, and GIGW…YYLI.

The protein belongs to the ABC transporter superfamily. ABCG family. PDR (TC 3.A.1.205) subfamily.

It localises to the cell membrane. It carries out the reaction voriconazole(in) + ATP + H2O = voriconazole(out) + ADP + phosphate + H(+). It catalyses the reaction fluconazole(in) + ATP + H2O = fluconazole(out) + ADP + phosphate + H(+). The catalysed reaction is (R)-miconazole(in) + ATP + H2O = (R)-miconazole(out) + ADP + phosphate + H(+). The enzyme catalyses (S)-miconazole(in) + ATP + H2O = (S)-miconazole(out) + ADP + phosphate + H(+). In terms of biological role, pleiotropic ABC efflux transporter that may be involved in the modulation susceptibility to a wide range of unrelated cytotoxic compounds, including ethidium bromide, ketoconazole, cycloheximide, fluconazole, griseofulvin, imazalil and itraconazole. This chain is ABC multidrug transporter MDR1, found in Trichophyton interdigitale (strain MR816).